Here is a 456-residue protein sequence, read N- to C-terminus: Phosphomannomutase (456 aa).

Serine 98 acts as the Phosphoserine intermediate in catalysis. Mg(2+)-binding residues include serine 98, aspartate 245, aspartate 247, and aspartate 249.

Belongs to the phosphohexose mutase family. Mg(2+) is required as a cofactor.

It catalyses the reaction alpha-D-mannose 1-phosphate = D-mannose 6-phosphate. It participates in nucleotide-sugar biosynthesis; GDP-alpha-D-mannose biosynthesis; alpha-D-mannose 1-phosphate from D-fructose 6-phosphate: step 2/2. Functionally, involved in the biosynthesis of the capsular polysaccharide colanic acid. The polypeptide is Phosphomannomutase (manB) (Salmonella typhimurium (strain LT2 / SGSC1412 / ATCC 700720)).